Consider the following 448-residue polypeptide: Protein arginine N-methyltransferase 2 (448 aa).

Interaction with ESR1 stretches follow at residues 1–289 (MEAP…SALK) and 145–287 (KESL…NLSA). The SH3 domain maps to 42–101 (LQPEEFVAIADYTATDETQLSFLRGEKILILRQTTADWWWGERAGCCGYIPANHLGKQLE). An asymmetric dimethylarginine mark is found at R73 and R84. The tract at residues 95–219 (HLGKQLEEYD…DVVLPEKVDV (125 aa)) is interaction with RB1. An SAM-dependent MTase PRMT-type domain is found at 111-414 (DEEYFDSYGT…CCVTKKSGME (304 aa)). S-adenosyl-L-methionine is bound by residues H124, R133, G157, E180, and E209. Active-site residues include E223 and E232.

It belongs to the class I-like SAM-binding methyltransferase superfamily. Protein arginine N-methyltransferase family. As to quaternary structure, self-associates. Interacts with HNRNPUL1. Interacts with NFKBIA. Interacts with NCOA6 coactivator. Interacts (via SH3 domain) with PRMT8. Interacts with AR. Interacts with ESR1, ESR2, PGR, PPARG, RARA, RXRA and THRB. Interacts with RB1 and E2F1. In terms of tissue distribution, expressed in liver, pancreas, lung, brain, skeletal muscle, heart, muscle and fat.

The protein localises to the cytoplasm. The protein resides in the nucleus. The enzyme catalyses L-arginyl-[protein] + 2 S-adenosyl-L-methionine = N(omega),N(omega)-dimethyl-L-arginyl-[protein] + 2 S-adenosyl-L-homocysteine + 2 H(+). In terms of biological role, arginine methyltransferase that methylates the guanidino nitrogens of arginyl residues in proteins such as STAT3, FBL, histone H4. May inhibit NF-kappa-B transcription, and promote apoptosis. Represses E2F1 transcriptional activity (in a RB1-dependent manner). Has a negative regulation effect on G1 to S transition of mitotic cell cycle. Involved in growth regulation. Acts as a coactivator (with NCOA2) of the androgen receptor (AR)-mediated transactivation. Acts as a coactivator (with estrogen) of estrogen receptor (ER)-mediated transactivation. Enhances PGR, PPARG, RARA-mediated transactivation. This Mus musculus (Mouse) protein is Protein arginine N-methyltransferase 2 (Prmt2).